Reading from the N-terminus, the 520-residue chain is MEELQGYLEKDGSRQQHFLYPLLFQEYIYALAHNHGLNGSIFYEPVEVFGYDNKSSLVLVKRLITRIYQQNFLISLVNDSNQNRFVGYNHNNFFFSHFHSQMISESFAIIVEIPFSLRLVSYFEEKEIPKYHNLRSIHSIFTFLEDKLSHLNYVSDILIPHPIHMEILVQILQCWIQDVPFLHLLRFFLHEYHNLNSLLITQKKSIYVFSKENKRLFRFLYNSYVFEWEFLFVFIRKQSSYLRLTSSGTFLGRTHFYEKIEHLQIKHFVVVCRNYFHRTLWFCKDPFMHYVRYQGKAILASKGTHLLMKKWKYHFFNFWQYYFHVWTQPYRIHINQLSNYSFYFLGYLSSLLLNFSAVRNQMLENSFLIDTITKKFDTXVPVIFLIGSLAKAKFCTVSGHPISEPIWTDLSDSDILDRFGRICRNLSHYHSGSSKKQGLYRIKYILRLSCARTLARKHKSTVRTFLRRLGSGLLEEFFTEEEQVLSLIFPKTTPFILHGSHRERIWYLDIIRINDLVNHS.

It belongs to the intron maturase 2 family. MatK subfamily.

It is found in the plastid. The protein resides in the chloroplast. In terms of biological role, usually encoded in the trnK tRNA gene intron. Probably assists in splicing its own and other chloroplast group II introns. This is Maturase K from Liriope muscari (Big blue lilyturf).